The primary structure comprises 484 residues: tRNA sulfurtransferase (484 aa).

Residues 63–167 form the THUMP domain; that stretch reads REMIERLCCT…DQRLFVVHRQ (105 aa). ATP contacts are provided by residues 185–186, Lys-267, Gly-289, and Gln-298; that span reads LM. Cys-346 and Cys-457 are joined by a disulfide. The 79-residue stretch at 405–483 folds into the Rhodanese domain; the sequence is ALAGQIVLDI…GHANVRVYRP (79 aa). The active-site Cysteine persulfide intermediate is Cys-457.

The protein belongs to the ThiI family.

The protein localises to the cytoplasm. The enzyme catalyses [ThiI sulfur-carrier protein]-S-sulfanyl-L-cysteine + a uridine in tRNA + 2 reduced [2Fe-2S]-[ferredoxin] + ATP + H(+) = [ThiI sulfur-carrier protein]-L-cysteine + a 4-thiouridine in tRNA + 2 oxidized [2Fe-2S]-[ferredoxin] + AMP + diphosphate. The catalysed reaction is [ThiS sulfur-carrier protein]-C-terminal Gly-Gly-AMP + S-sulfanyl-L-cysteinyl-[cysteine desulfurase] + AH2 = [ThiS sulfur-carrier protein]-C-terminal-Gly-aminoethanethioate + L-cysteinyl-[cysteine desulfurase] + A + AMP + 2 H(+). It participates in cofactor biosynthesis; thiamine diphosphate biosynthesis. Functionally, catalyzes the ATP-dependent transfer of a sulfur to tRNA to produce 4-thiouridine in position 8 of tRNAs, which functions as a near-UV photosensor. Also catalyzes the transfer of sulfur to the sulfur carrier protein ThiS, forming ThiS-thiocarboxylate. This is a step in the synthesis of thiazole, in the thiamine biosynthesis pathway. The sulfur is donated as persulfide by IscS. The sequence is that of tRNA sulfurtransferase from Azotobacter vinelandii (strain DJ / ATCC BAA-1303).